An 86-amino-acid chain; its full sequence is Small ribosomal subunit protein bS20 (86 aa).

A disordered region spans residues Met-1 to Ser-23.

Belongs to the bacterial ribosomal protein bS20 family.

In terms of biological role, binds directly to 16S ribosomal RNA. In Buchnera aphidicola subsp. Baizongia pistaciae (strain Bp), this protein is Small ribosomal subunit protein bS20.